Reading from the N-terminus, the 381-residue chain is Creatine kinase M-type (381 aa).

The 88-residue stretch at 11–98 folds into the Phosphagen kinase N-terminal domain; that stretch reads KLNYKPEEEY…FDPIIQDRHG (88 aa). The Phosphagen kinase C-terminal domain maps to 125 to 367; it reads YVLSSRVRTG…KLMVEMEKKL (243 aa). Residue 128–132 participates in ATP binding; the sequence is SSRVR. Ser-164 is modified (phosphoserine). A Phosphothreonine modification is found at Thr-166. Ser-178 bears the Phosphoserine mark. At Thr-180 the chain carries Phosphothreonine. His-191 is an ATP binding site. A Phosphoserine modification is found at Ser-199. The ATP site is built by Arg-236 and Arg-292. Residues Thr-313 and Thr-322 each carry the phosphothreonine modification. ATP is bound by residues 320–325 and Asp-335; that span reads RGTGGV. Phosphoserine is present on Ser-372.

Belongs to the ATP:guanido phosphotransferase family. Dimer of identical or non-identical chains, which can be either B (brain type) or M (muscle type). With MM being the major form in skeletal muscle and myocardium, MB existing in myocardium, and BB existing in many tissues, especially brain.

Its subcellular location is the cytoplasm. It catalyses the reaction creatine + ATP = N-phosphocreatine + ADP + H(+). Its function is as follows. Reversibly catalyzes the transfer of phosphate between ATP and various phosphogens (e.g. creatine phosphate). Creatine kinase isoenzymes play a central role in energy transduction in tissues with large, fluctuating energy demands, such as skeletal muscle, heart, brain and spermatozoa. This Canis lupus familiaris (Dog) protein is Creatine kinase M-type (CKM).